The primary structure comprises 452 residues: Adenylosuccinate synthetase isozyme 1 (452 aa).

A disordered region spans residues 1 to 22; that stretch reads MSGTRASNDRSSHPGGHKRPRY. GTP contacts are provided by residues 37–43 and 65–67; these read GDEGKGK and GHT. Asp-38 (proton acceptor) is an active-site residue. Residues Asp-38 and Gly-65 each coordinate Mg(2+). Asp-38 contacts substrate. Residues 38 to 41, 63 to 66, Thr-158, Arg-172, Asn-251, Thr-266, and Arg-330 contribute to the IMP site; these read DEGK and NAGH. Residue His-66 is the Proton donor of the active site. 326 to 332 lines the substrate pocket; the sequence is VTTGRKR. Residues Arg-332, 358–360, and 440–443 each bind GTP; these read KLD and GVGK.

Belongs to the adenylosuccinate synthetase family. Homodimer. Requires Mg(2+) as cofactor.

It is found in the cytoplasm. It carries out the reaction IMP + L-aspartate + GTP = N(6)-(1,2-dicarboxyethyl)-AMP + GDP + phosphate + 2 H(+). Its pathway is purine metabolism; AMP biosynthesis via de novo pathway; AMP from IMP: step 1/2. Functionally, component of the purine nucleotide cycle (PNC), which interconverts IMP and AMP to regulate the nucleotide levels in various tissues, and which contributes to glycolysis and ammoniagenesis. Catalyzes the first committed step in the biosynthesis of AMP from IMP. The sequence is that of Adenylosuccinate synthetase isozyme 1 (adss1) from Xenopus tropicalis (Western clawed frog).